Reading from the N-terminus, the 87-residue chain is Small ribosomal subunit protein bS20 (87 aa).

It belongs to the bacterial ribosomal protein bS20 family.

Its function is as follows. Binds directly to 16S ribosomal RNA. The protein is Small ribosomal subunit protein bS20 of Mycoplasma pneumoniae (strain ATCC 29342 / M129 / Subtype 1) (Mycoplasmoides pneumoniae).